Consider the following 77-residue polypeptide: Acyl carrier protein (77 aa).

Positions 2 to 77 (SDVAEKVKKI…DAIAYIEEKK (76 aa)) constitute a Carrier domain. O-(pantetheine 4'-phosphoryl)serine is present on Ser37.

It belongs to the acyl carrier protein (ACP) family. In terms of processing, 4'-phosphopantetheine is transferred from CoA to a specific serine of apo-ACP by AcpS. This modification is essential for activity because fatty acids are bound in thioester linkage to the sulfhydryl of the prosthetic group.

It is found in the cytoplasm. Its pathway is lipid metabolism; fatty acid biosynthesis. Carrier of the growing fatty acid chain in fatty acid biosynthesis. This is Acyl carrier protein from Desulfovibrio desulfuricans (strain ATCC 27774 / DSM 6949 / MB).